The following is a 54-amino-acid chain: Large ribosomal subunit protein bL33A (54 aa).

Belongs to the bacterial ribosomal protein bL33 family.

This chain is Large ribosomal subunit protein bL33A, found in Mycolicibacterium gilvum (strain PYR-GCK) (Mycobacterium gilvum (strain PYR-GCK)).